The following is a 347-amino-acid chain: MKMEEMSLSGLDNSKLEAIAQEIYADLVEDSCLGFCFEVHRAVKCGYFFLDDTDPDSMKDFEIVDQPGLDIFGQVFNQWKSKECVCPNCSRSIAASRFAPHLEKCLGMGRNSSRIANRRIANSNNMNKSESDQEDNDDINDNDWSYGSEKKAKKRKSDKNPNSPRRSKSLKHKNGELSNSDPFKYSNSTGISYETLGPEELRSLLTTQCGVISEHTKKMCTRSLRCPQHTDEQRRTVRIYFLGPSAVLPEVESSLDNDGFDMTDSQALISRLQWDGSSDLSPSDSGSSKTSENQGWGLGTNSSESRKTKKKKSHLSLVGTASGLGSNKKKKPKPPAPPTPSIYDDIN.

Residues 84–105 form an SGF11-type zinc finger; the sequence is CVCPNCSRSIAASRFAPHLEKC. A compositionally biased stretch (low complexity) spans 116 to 125; the sequence is ANRRIANSNN. Positions 116–184 are disordered; that stretch reads ANRRIANSNN…GELSNSDPFK (69 aa). Residues S129 and S131 each carry the phosphoserine modification. Residues 132–141 show a composition bias toward acidic residues; sequence DQEDNDDIND. In terms of domain architecture, SCA7 spans 196 to 263; that stretch reads LGPEELRSLL…SLDNDGFDMT (68 aa). A compositionally biased stretch (low complexity) spans 275 to 288; it reads DGSSDLSPSDSGSS. The tract at residues 275-347 is disordered; sequence DGSSDLSPSD…PTPSIYDDIN (73 aa). Residues S278, S281, and S326 each carry the phosphoserine modification.

It belongs to the SGF11 family. Component of some SAGA transcription coactivator-HAT complexes, at least composed of ATXN7, ATXN7L3, ENY2, GCN5L2, SUPT3H, TAF10, TRRAP and USP22. Within the SAGA complex, ENY2, ATXN7, ATXN7L3, and USP22 form an additional subcomplex of SAGA called the DUB module (deubiquitination module). Interacts directly with ENY2 and USP22.

The protein localises to the nucleus. Component of the transcription regulatory histone acetylation (HAT) complex SAGA, a multiprotein complex that activates transcription by remodeling chromatin and mediating histone acetylation and deubiquitination. Within the SAGA complex, participates in a subcomplex that specifically deubiquitinates both histones H2A and H2B. The SAGA complex is recruited to specific gene promoters by activators such as MYC, where it is required for transcription. Required for nuclear receptor-mediated transactivation. Within the complex, it is required to recruit USP22 and ENY2 into the SAGA complex. Regulates H2B monoubiquitination (H2Bub1) levels. Affects subcellular distribution of ENY2, USP22 and ATXN7L3B. The protein is Ataxin-7-like protein 3 (Atxn7l3) of Mus musculus (Mouse).